The primary structure comprises 357 residues: MAQHRVVLLPGDGIGPEITAVARQLLEVVSRRHGFSLSFEEQPIGGSAIDATGEPLPASTLDACKAADAVLLAAIGSPCFDSLPREKRPETGLLGLRAGMELFANLRPVKIVPALIDASSLKREVIEGVDLMVVRELTGGIYFGQPKGRIETEGDERGFNTMTYSASEVDRIAKVAFEIAQERRGRLCSVDKANVLDVSQLWRDRVDAMAPSYGPVEVSHMYVDNAAMQLVRDPRQFDVLLTGNLFGDILSDEAAMLTGSIGMLPSASLGSEGPGLFEPVHGSAPDIAGQDKANPMAMVLSAAMMLRIGLKQAAAADDLEAAVDAVLAGGFRTGDLMAEGCTQLGCRAMGEQLLKAL.

Residues Arg-97, Arg-107, Arg-135, and Asp-224 each coordinate substrate. Mg(2+)-binding residues include Asp-224, Asp-248, and Asp-252. Residue 282–294 participates in NAD(+) binding; sequence GSAPDIAGQDKAN.

The protein belongs to the isocitrate and isopropylmalate dehydrogenases family. LeuB type 1 subfamily. In terms of assembly, homodimer. It depends on Mg(2+) as a cofactor. Mn(2+) serves as cofactor.

Its subcellular location is the cytoplasm. It catalyses the reaction (2R,3S)-3-isopropylmalate + NAD(+) = 4-methyl-2-oxopentanoate + CO2 + NADH. It participates in amino-acid biosynthesis; L-leucine biosynthesis; L-leucine from 3-methyl-2-oxobutanoate: step 3/4. Its function is as follows. Catalyzes the oxidation of 3-carboxy-2-hydroxy-4-methylpentanoate (3-isopropylmalate) to 3-carboxy-4-methyl-2-oxopentanoate. The product decarboxylates to 4-methyl-2 oxopentanoate. The chain is 3-isopropylmalate dehydrogenase from Synechococcus sp. (strain CC9605).